The chain runs to 443 residues: Phosphoglucosamine mutase (443 aa).

Ser101 acts as the Phosphoserine intermediate in catalysis. Residues Ser101, Asp239, Asp241, and Asp243 each coordinate Mg(2+). Ser101 is modified (phosphoserine).

The protein belongs to the phosphohexose mutase family. Requires Mg(2+) as cofactor. Activated by phosphorylation.

It catalyses the reaction alpha-D-glucosamine 1-phosphate = D-glucosamine 6-phosphate. Catalyzes the conversion of glucosamine-6-phosphate to glucosamine-1-phosphate. The chain is Phosphoglucosamine mutase from Francisella philomiragia subsp. philomiragia (strain ATCC 25017 / CCUG 19701 / FSC 153 / O#319-036).